A 34-amino-acid polypeptide reads, in one-letter code: Photosystem II reaction center protein Psb30 (34 aa).

The helical transmembrane segment at 6–26 threads the bilayer; the sequence is VVFQLMALFFVLAAGPAVVVL.

It belongs to the Psb30/Ycf12 family. In terms of assembly, PSII is composed of 1 copy each of membrane proteins PsbA, PsbB, PsbC, PsbD, PsbE, PsbF, PsbH, PsbI, PsbJ, PsbK, PsbL, PsbM, PsbT, PsbX, PsbY, PsbZ, Psb30/Ycf12, peripheral proteins of the oxygen-evolving complex and a large number of cofactors. It forms dimeric complexes.

It localises to the plastid. It is found in the chloroplast thylakoid membrane. Its function is as follows. A core subunit of photosystem II (PSII), probably helps stabilize the reaction center. This chain is Photosystem II reaction center protein Psb30, found in Stigeoclonium helveticum (Green alga).